We begin with the raw amino-acid sequence, 573 residues long: MKKLSGAEMVVQSLRDEGVEYVFGYPGGAVLDIYDAIHTLGGIEHILVRHEQAAVHMADGYARSTGKVGCVLVTSGPGATNAITGILTAYTDSVPMVIISGQVMSNLIGSDAFQECDMLGISRPVVKHSFIVKKAEDIPSTLKKAFYIASTGRPGPVVVDIPKDTVNPNFKYPYEYPEYVELRSYNPTVNGHKGQIKKALKALLVAKKPILFVGGGAITAECSEQLIQFAQRLNLPVTSSLMGLGAYPSTDKQFLGMLGMHGTLEANTAMHESDLILGIGVRFDDRTTNNLEKYCPNAKVIHIDIDPTSISKNVPVAIPIVGNAKNVLEEFLGLLNEEGLKSQTDLESWWQEINQWKAKKCLEFDRTSGVIKPQQVVEAVYRLTKGQAYVASDVGQHQMFAALHYPFDEPRHWINSGGAGTMGFGFPAALGVKLAHPEGTVVCVTGDGSIQMNIQELSTATQYGIPVVIICLNNHFLGMVKQWQDLIYSGRHSQTYMNSLPDFAKLAESYGHVGIKIATPDELESKLQEAFSIKNKLVFVDINVDESEHVYPMQIRGGAMNEMILSKPQEETN.

Thiamine diphosphate is bound at residue Glu51. FAD contacts are provided by residues Arg153, 261 to 282 (HGTLEANTAMHESDLILGIGVR), and 304 to 323 (DIDPTSISKNVPVAIPIVGN). The segment at 396–476 (QHQMFAALHY…VVIICLNNHF (81 aa)) is thiamine pyrophosphate binding. The Mg(2+) site is built by Asp447 and Asn474.

This sequence belongs to the TPP enzyme family. Dimer of large and small chains. Requires Mg(2+) as cofactor. It depends on thiamine diphosphate as a cofactor.

It carries out the reaction 2 pyruvate + H(+) = (2S)-2-acetolactate + CO2. It functions in the pathway amino-acid biosynthesis; L-isoleucine biosynthesis; L-isoleucine from 2-oxobutanoate: step 1/4. It participates in amino-acid biosynthesis; L-valine biosynthesis; L-valine from pyruvate: step 1/4. This chain is Acetolactate synthase large subunit (ilvI), found in Haemophilus influenzae (strain ATCC 51907 / DSM 11121 / KW20 / Rd).